The primary structure comprises 236 residues: Phosphoribosylaminoimidazole-succinocarboxamide synthase (236 aa).

Belongs to the SAICAR synthetase family.

It carries out the reaction 5-amino-1-(5-phospho-D-ribosyl)imidazole-4-carboxylate + L-aspartate + ATP = (2S)-2-[5-amino-1-(5-phospho-beta-D-ribosyl)imidazole-4-carboxamido]succinate + ADP + phosphate + 2 H(+). It functions in the pathway purine metabolism; IMP biosynthesis via de novo pathway; 5-amino-1-(5-phospho-D-ribosyl)imidazole-4-carboxamide from 5-amino-1-(5-phospho-D-ribosyl)imidazole-4-carboxylate: step 1/2. The polypeptide is Phosphoribosylaminoimidazole-succinocarboxamide synthase (Rickettsia typhi (strain ATCC VR-144 / Wilmington)).